The chain runs to 180 residues: uncharacterized protein (180 aa).

The 136-residue stretch at 45-180 folds into the N-acetyltransferase domain; that stretch reads FVFSQVRTLD…GNRCAFWYAN (136 aa).

The protein belongs to the acetyltransferase family. Ycf52 subfamily.

This is an uncharacterized protein from Prochlorococcus marinus (strain SARG / CCMP1375 / SS120).